The primary structure comprises 1499 residues: Streptococcal surface protein B (1499 aa).

The signal sequence occupies residues 1–37 (MQKREVFGFRKSKVAKTLCGAVLGAALIAIADQQVLA). The interval 50–84 (AVTTTGNPATNLPEAQGEATEAASQSQAQAGSKDG) is disordered. Ag I/II A repeat units lie at residues 145 to 219 (KKTT…QKAN), 220 to 301 (EDSQ…KKAK), 302 to 383 (EDND…KQAN), and 384 to 465 (ATNE…KKDF). Disordered stretches follow at residues 689–709 (YADS…SEWD), 763–907 (TAPT…TPPV), and 1409–1472 (RTTT…TGTN). Basic and acidic residues predominate over residues 694–705 (NAEKSRGARWDT). The segment covering 789-799 (PTPPVKTPDQP) has biased composition (pro residues). Over residues 800 to 815 (EPSKPEEPTYETEKPL) the composition is skewed to basic and acidic residues. The segment covering 828-838 (PTPPVKIPDQP) has biased composition (pro residues). The segment covering 839-854 (EPSKPEEPTYETEKPL) has biased composition (basic and acidic residues). Composition is skewed to pro residues over residues 867–877 (PTPPVKTPDQP) and 888–907 (DPLP…TPPV). The span at 1428–1450 (KPKDPDKPETPKEPKVPSPKVED) shows a compositional bias: basic and acidic residues. Positions 1466–1470 (LPKTG) match the LPXTG sorting signal motif. Thr-1469 is modified (pentaglycyl murein peptidoglycan amidated threonine). The propeptide at 1470–1499 (GTNDATYMPYLGLAALVGFLGLGLAKRKED) is removed by sortase.

It belongs to the antigen I/II family.

It is found in the secreted. The protein localises to the cell wall. It localises to the cell surface. Its function is as follows. Adhesin that mediates binding of bacteria to a variety of host cells. Plays a role in the bacterial invasion of dentinal tubules. A host immunostimulatory component, it modulates the innate immunity response. Plays a protective role against some antibiotics and cationic antimicrobial peptides (histatin-5, HTN3, but not beta-defensin 4A, DEFB4A). This Streptococcus gordonii (strain Challis / ATCC 35105 / BCRC 15272 / CH1 / DL1 / V288) protein is Streptococcal surface protein B.